The sequence spans 886 residues: Adhesion G protein-coupled receptor E1 (886 aa).

The N-terminal stretch at 1 to 20 (MRGFNLLLFWGCCVMHSWEG) is a signal peptide. Residues 21–599 (HIRPTRKPNT…IMASGELTMD (579 aa)) lie on the Extracellular side of the membrane. Residues 31–79 (KGNNCRDSTLCPAYATCTNTVDSYYCACKQGFLSSNGQNHFKDPGVRCK) form the EGF-like 1 domain. Disulfide bonds link C35–C47, C41–C56, C58–C78, C84–C97, C91–C106, C108–C130, C136–C148, C142–C157, C159–C170, C176–C188, C182–C197, C199–C219, C225–C235, C229–C244, C246–C266, C272–C285, C279–C294, and C296–C315. An EGF-like 2; calcium-binding domain is found at 80–131 (DIDECSQSPQPCGPNSSCKNLSGRYKCSCLDGFSSPTGNDWVPGKPGNFSCT). N-linked (GlcNAc...) asparagine glycans are attached at residues N94, N99, and N127. In terms of domain architecture, EGF-like 3; calcium-binding spans 132–171 (DINECLTSSVCPEHSDCVNSMGSYSCSCQVGFISRNSTCE). An N-linked (GlcNAc...) asparagine glycan is attached at N167. The region spanning 172–220 (DVDECADPRACPEHATCNNTVGNYSCFCNPGFESSSGHLSFQGLKASCE) is the EGF-like 4; calcium-binding domain. N189 and N194 each carry an N-linked (GlcNAc...) asparagine glycan. One can recognise an EGF-like 5; calcium-binding domain in the interval 221–267 (DIDECTEMCPINSTCTNTPGSYFCTCHPGFAPSNGQLNFTDQGVECR). 2 N-linked (GlcNAc...) asparagine glycosylation sites follow: N232 and N258. Residues 268-316 (DIDECRQDPSTCGPNSICTNALGSYSCGCIAGFHPNPEGSQKDGNFSCQ) form the EGF-like 6; calcium-binding domain. Residues N312, N366, N375, and N448 are each glycosylated (N-linked (GlcNAc...) asparagine). One can recognise a GAIN-B domain in the interval 431–597 (EYLDIESKVI…AVIMASGELT (167 aa)). 2 disulfide bridges follow: C550/C579 and C567/C581. The segment at 550–597 (CVSWSTDVKGGRWTSFGCVILEASETYTICSCNQMANLAVIMASGELT) is GPS. Residues 600-627 (FSLYIISHVGIIISLVCLVLAIATFLLC) form a helical membrane-spanning segment. Residues 628–634 (RSIRNHN) are Cytoplasmic-facing. A helical transmembrane segment spans residues 635 to 656 (TYLHLHLCVCLLLAKTLFLAGI). The Extracellular portion of the chain corresponds to 657–666 (HKTDNKMGCA). Residues 667 to 690 (IIAGFLHYLFLACFFWMLVEAVIL) traverse the membrane as a helical segment. Topologically, residues 691–709 (FLMVRNLKVVNYFSSRNIK) are cytoplasmic. Residues 710-731 (MLHICAFGYGLPMLVVVISASV) form a helical membrane-spanning segment. At 732–747 (QPQGYGMHNRCWLNTE) the chain is on the extracellular side. The helical transmembrane segment at 748–776 (TGFIWSFLGPVCTVIVINSLLLTWTLWIL) threads the bilayer. Over 777 to 794 (RQRLSSVNAEVSTLKDTR) the chain is Cytoplasmic. Residues 795–814 (LLTFKAFAQLFILGCSWVLG) traverse the membrane as a helical segment. Residues 815–829 (IFQIGPVAGVMAYLF) lie on the Extracellular side of the membrane. Residues 830 to 852 (TIINSLQGAFIFLIHCLLNGQVR) traverse the membrane as a helical segment. Residues 853–886 (EEYKRWITGKTKPSSQSQTSRILLSSMPSASKTG) are Cytoplasmic-facing. A disordered region spans residues 862-886 (KTKPSSQSQTSRILLSSMPSASKTG). Residues 863-886 (TKPSSQSQTSRILLSSMPSASKTG) are compositionally biased toward polar residues.

Belongs to the G-protein coupled receptor 2 family. Adhesion G-protein coupled receptor (ADGR) subfamily. In terms of tissue distribution, expression is restricted to eosinophils.

Its subcellular location is the cell membrane. Orphan receptor involved in cell adhesion and probably in cell-cell interactions specifically involving cells of the immune system. May play a role in regulatory T-cells (Treg) development. The protein is Adhesion G protein-coupled receptor E1 of Homo sapiens (Human).